Here is a 451-residue protein sequence, read N- to C-terminus: Tubulin alpha-1/alpha-2 chain (451 aa).

Gln-11 is a binding site for GTP. Position 40 is an N6-acetyllysine (Lys-40). Positions 71, 144, 145, 179, 206, and 228 each coordinate GTP. Glu-71 contributes to the Mg(2+) binding site. Glu-254 is a catalytic residue.

The protein belongs to the tubulin family. As to quaternary structure, dimer of alpha and beta chains. A typical microtubule is a hollow water-filled tube with an outer diameter of 25 nm and an inner diameter of 15 nM. Alpha-beta heterodimers associate head-to-tail to form protofilaments running lengthwise along the microtubule wall with the beta-tubulin subunit facing the microtubule plus end conferring a structural polarity. Microtubules usually have 13 protofilaments but different protofilament numbers can be found in some organisms and specialized cells. Mg(2+) serves as cofactor. Post-translationally, undergoes a tyrosination/detyrosination cycle, the cyclic removal and re-addition of a C-terminal tyrosine residue by the enzymes tubulin tyrosine carboxypeptidase (TTCP) and tubulin tyrosine ligase (TTL), respectively. In terms of processing, acetylation of alpha chains at Lys-40 stabilizes microtubules and affects affinity and processivity of microtubule motors. This modification has a role in multiple cellular functions, ranging from cell motility, cell cycle progression or cell differentiation to intracellular trafficking and signaling.

The protein localises to the cytoplasm. Its subcellular location is the cytoskeleton. The catalysed reaction is GTP + H2O = GDP + phosphate + H(+). Its function is as follows. Tubulin is the major constituent of microtubules, a cylinder consisting of laterally associated linear protofilaments composed of alpha- and beta-tubulin heterodimers. Microtubules grow by the addition of GTP-tubulin dimers to the microtubule end, where a stabilizing cap forms. Below the cap, tubulin dimers are in GDP-bound state, owing to GTPase activity of alpha-tubulin. This chain is Tubulin alpha-1/alpha-2 chain (TUBA1), found in Volvox carteri (Green alga).